An 87-amino-acid polypeptide reads, in one-letter code: RNA-binding protein Hfq (87 aa).

Residues 9-68 enclose the Sm domain; sequence DPFLNALRRERIPVSIYLVNGIKLQGQIESFDQFVILLKNTVNQMVYKHAISTVVPARPV. Residues 65–87 are disordered; that stretch reads ARPVSHHSGDRPASDRPAEKSEE. A compositionally biased stretch (basic and acidic residues) spans 71–87; it reads HSGDRPASDRPAEKSEE.

The protein belongs to the Hfq family.

In terms of biological role, RNA chaperone that binds small regulatory RNA (sRNAs) and mRNAs to facilitate mRNA translational regulation in response to envelope stress, environmental stress and changes in metabolite concentrations. Also binds with high specificity to tRNAs. Essential for virulence in the suckling mouse model of cholera pathogenesis. In Vibrio cholerae serotype O1 (strain ATCC 39315 / El Tor Inaba N16961), this protein is RNA-binding protein Hfq.